We begin with the raw amino-acid sequence, 155 residues long: Large-conductance mechanosensitive channel (155 aa).

Transmembrane regions (helical) follow at residues Val-16–Leu-36, Val-40–Ile-60, and Gly-88–Val-108.

Belongs to the MscL family. In terms of assembly, homopentamer.

It is found in the cell inner membrane. Channel that opens in response to stretch forces in the membrane lipid bilayer. May participate in the regulation of osmotic pressure changes within the cell. In Chlorobium chlorochromatii (strain CaD3), this protein is Large-conductance mechanosensitive channel.